The chain runs to 265 residues: Cytochrome c oxidase subunit 3 (265 aa).

6 helical membrane passes run 16–36 (PWPISGSLGALATTVGGVMYM), 41–61 (GGATLLSLGLIFLLYTMFVWW), 84–104 (YGSILFIVSEVMFLFAFFWAS), 162–182 (AVYALVATVSLALVSTGFQGM), 200–220 (FFLATGFHGFHVIIGTLFLIV), and 245–265 (WHFVDVVRLFPFVSIYWWGGI).

This sequence belongs to the cytochrome c oxidase subunit 3 family. As to quaternary structure, component of the cytochrome c oxidase (complex IV, CIV), a multisubunit enzyme composed of a catalytic core of 3 subunits and several supernumerary subunits. The complex exists as a monomer or a dimer and forms supercomplexes (SCs) in the inner mitochondrial membrane with ubiquinol-cytochrome c oxidoreductase (cytochrome b-c1 complex, complex III, CIII).

It localises to the mitochondrion inner membrane. It carries out the reaction 4 Fe(II)-[cytochrome c] + O2 + 8 H(+)(in) = 4 Fe(III)-[cytochrome c] + 2 H2O + 4 H(+)(out). Component of the cytochrome c oxidase, the last enzyme in the mitochondrial electron transport chain which drives oxidative phosphorylation. The respiratory chain contains 3 multisubunit complexes succinate dehydrogenase (complex II, CII), ubiquinol-cytochrome c oxidoreductase (cytochrome b-c1 complex, complex III, CIII) and cytochrome c oxidase (complex IV, CIV), that cooperate to transfer electrons derived from NADH and succinate to molecular oxygen, creating an electrochemical gradient over the inner membrane that drives transmembrane transport and the ATP synthase. Cytochrome c oxidase is the component of the respiratory chain that catalyzes the reduction of oxygen to water. Electrons originating from reduced cytochrome c in the intermembrane space (IMS) are transferred via the dinuclear copper A center (CU(A)) of subunit 2 and heme A of subunit 1 to the active site in subunit 1, a binuclear center (BNC) formed by heme A3 and copper B (CU(B)). The BNC reduces molecular oxygen to 2 water molecules using 4 electrons from cytochrome c in the IMS and 4 protons from the mitochondrial matrix. This chain is Cytochrome c oxidase subunit 3 (COX3), found in Aegilops columnaris (Goatgrass).